The sequence spans 339 residues: Photosystem II assembly lipoprotein Ycf48 (339 aa).

The signal sequence occupies residues 1 to 22 (MVIVKSWQKIFALLVVLLLCIG). Cysteine 23 is lipidated: N-palmitoyl cysteine. Cysteine 23 carries the S-diacylglycerol cysteine lipid modification.

This sequence belongs to the Ycf48 family. Part of early PSII assembly complexes which includes D1 (psbA) and PsbI; not found in mature PSII. Binds to the lumenal side of PSII complexes. Interacts with YidC.

It localises to the cellular thylakoid membrane. In terms of biological role, a factor required for optimal assembly of photosystem II (PSII), acting in the early stages of PSII assembly. Also plays a role in replacement of photodamaged D1 (psbA). Assists YidC in synthesis of chlorophyll-binding proteins. The polypeptide is Photosystem II assembly lipoprotein Ycf48 (Trichormus variabilis (strain ATCC 29413 / PCC 7937) (Anabaena variabilis)).